A 204-amino-acid polypeptide reads, in one-letter code: ATP-dependent Clp protease proteolytic subunit (204 aa).

Serine 100 serves as the catalytic Nucleophile. Histidine 125 is a catalytic residue.

This sequence belongs to the peptidase S14 family. As to quaternary structure, fourteen ClpP subunits assemble into 2 heptameric rings which stack back to back to give a disk-like structure with a central cavity, resembling the structure of eukaryotic proteasomes.

Its subcellular location is the cytoplasm. The catalysed reaction is Hydrolysis of proteins to small peptides in the presence of ATP and magnesium. alpha-casein is the usual test substrate. In the absence of ATP, only oligopeptides shorter than five residues are hydrolyzed (such as succinyl-Leu-Tyr-|-NHMec, and Leu-Tyr-Leu-|-Tyr-Trp, in which cleavage of the -Tyr-|-Leu- and -Tyr-|-Trp bonds also occurs).. Cleaves peptides in various proteins in a process that requires ATP hydrolysis. Has a chymotrypsin-like activity. Plays a major role in the degradation of misfolded proteins. This is ATP-dependent Clp protease proteolytic subunit from Anaeromyxobacter sp. (strain Fw109-5).